The chain runs to 289 residues: MQANVQAITEAGTSRFVTVKDGDTEFRIHCNDTGAGAETVVMLHGSGPGATGWANFNRNVEPLVAAGYRVLLVDCPGWGKSDPVVNAGSRSELNGRVLKGVLDELDIERVHILGNSMGGHSAVAFALANPQRVGKLVLMGGGTGGPSLYAPMPTEGIKLLNGLYREPSIENLKRMMNVFVYDASSLTDDLMQARLDNMLARRDHLENFVKSLAANPKQFTDYGSRLGEITAPTLVIWGRDDRFVPMDVGLRLIAGIPNAQMHIFNRCGHWAQWEHAKAFNRMVVDFLGN.

Residue histidine 269 is the Proton acceptor of the active site.

This sequence belongs to the AB hydrolase superfamily. MhpC family. Homodimer.

It carries out the reaction (2Z,4E)-2-hydroxy-6-oxonona-2,4-dienedioate + H2O = (2Z)-2-hydroxypenta-2,4-dienoate + succinate + H(+). The enzyme catalyses (2Z,4E,7E)-2-hydroxy-6-oxonona-2,4,7-trienedioate + H2O = (2Z)-2-hydroxypenta-2,4-dienoate + fumarate + H(+). It functions in the pathway aromatic compound metabolism; 3-phenylpropanoate degradation. In terms of biological role, catalyzes the cleavage of the C5-C6 bond of 2-hydroxy-6-oxononadienedioate and 2-hydroxy-6-oxononatrienedioate, a dienol ring fission product of the bacterial meta-cleavage pathway for degradation of phenylpropionic acid. The protein is 2-hydroxy-6-oxononadienedioate/2-hydroxy-6-oxononatrienedioate hydrolase of Cupriavidus pinatubonensis (strain JMP 134 / LMG 1197) (Cupriavidus necator (strain JMP 134)).